We begin with the raw amino-acid sequence, 588 residues long: Thioredoxin domain-containing protein 3 (588 aa).

Residues 2 to 119 (ASKKREVQLQ…VINLIDEERK (118 aa)) enclose the Thioredoxin domain. Residues cysteine 39 and cysteine 42 are joined by a disulfide bond. 3 NDK regions span residues 157 to 257 (IAII…DQPE), 315 to 455 (LEKT…STLG), and 456 to 588 (LIKP…PEEN). Residues 230-261 (GSKHNPPSEETEPQTDTEPNERSEDQPEVEAQ) form a disordered region.

This sequence in the C-terminal section; belongs to the NDK family. In terms of assembly, monomer. In terms of tissue distribution, testis-specific. Expressed only in primary spermatocytes and round spermatids.

It is found in the cytoplasm. Its function is as follows. Probably required during the final stages of sperm tail maturation in the testis and/or epididymis, where extensive disulfide bonding of fibrous sheath (FS) proteins occurs. In vitro, it has neither nucleoside diphosphate kinase (NDPK) activity nor reducing activity on disulfide bonds. Exhibits a 3'-5' exonuclease activity with a preference for single-stranded DNA, suggesting roles in DNA proofreading and repair. This chain is Thioredoxin domain-containing protein 3, found in Homo sapiens (Human).